The chain runs to 91 residues: UPF0250 protein HCH_05838 (91 aa).

This sequence belongs to the UPF0250 family.

In Hahella chejuensis (strain KCTC 2396), this protein is UPF0250 protein HCH_05838.